The primary structure comprises 311 residues: Aspartate carbamoyltransferase catalytic subunit (311 aa).

Residues R58 and T59 each coordinate carbamoyl phosphate. K86 is a binding site for L-aspartate. Carbamoyl phosphate-binding residues include R108, H136, and Q139. L-aspartate is bound by residues R169 and R223. G264 and P265 together coordinate carbamoyl phosphate.

It belongs to the aspartate/ornithine carbamoyltransferase superfamily. ATCase family. In terms of assembly, heterododecamer (2C3:3R2) of six catalytic PyrB chains organized as two trimers (C3), and six regulatory PyrI chains organized as three dimers (R2).

It catalyses the reaction carbamoyl phosphate + L-aspartate = N-carbamoyl-L-aspartate + phosphate + H(+). It participates in pyrimidine metabolism; UMP biosynthesis via de novo pathway; (S)-dihydroorotate from bicarbonate: step 2/3. In terms of biological role, catalyzes the condensation of carbamoyl phosphate and aspartate to form carbamoyl aspartate and inorganic phosphate, the committed step in the de novo pyrimidine nucleotide biosynthesis pathway. This is Aspartate carbamoyltransferase catalytic subunit from Ruegeria pomeroyi (strain ATCC 700808 / DSM 15171 / DSS-3) (Silicibacter pomeroyi).